The chain runs to 328 residues: Phospholipid scramblase 1 (328 aa).

A proline-rich domain (PRD) region spans residues 1–93 (MENHSKQTEA…NHPGGPGGTP (93 aa)). Residues 1–96 (MENHSKQTEA…GGPGGTPWMP (96 aa)) form a disordered region. Residues 1–297 (MENHSKQTEA…IQFPLDLDVK (297 aa)) are Cytoplasmic-facing. The short motif at 18 to 26 (PAGYPPPYP) is the SH3-binding 1 element. The short motif at 22-25 (PPPY) is the PPxY motif element. Positions 28 to 47 (AAFQGPSDHAAYPIPQAGYQ) are enriched in low complexity. Over residues 49–64 (PPGPYPGPQPGYPVPP) the composition is skewed to pro residues. The SH3-binding 2 motif lies at 56 to 64 (PQPGYPVPP). A Phosphotyrosine; by ABL modification is found at Tyr83. The SH3-binding 3 motif lies at 93-101 (PWMPAPPPP). Thr170 is modified (phosphothreonine; by PKC/PRKCD). Residues Cys193, Cys194, Cys197, and Cys198 are each lipidated (S-palmitoyl cysteine). Residues 269–275 (SKQWSGF) carry the Nuclear localization signal motif. A helical transmembrane segment spans residues 298–314 (MKAVMLGACFLIDFMFF). Residues 315–328 (ERTGNEEQRSGAWQ) are Extracellular-facing.

It belongs to the phospholipid scramblase family. Forms homooligomers in the presence of calcium. Interacts with ABL. Interacts with RELT, RELL1 and RELL2. Interacts with OXSR1 in the presence of RELT. Interacts with OCLN, TOP2A and TOP2B. Interacts with TRPC1, TRPC4 and TRPC5. Interacts with ILDR1. Ca(2+) is required as a cofactor. Mg(2+) serves as cofactor. It depends on Zn(2+) as a cofactor. Post-translationally, phosphorylation at Thr-170 by PKC/PKCD increases its phospholipid scramblase activity during both cell stimulation and apoptosis. Phosphorylated by OXSR1 in the presence of RELT. Palmitoylation is required for its phospholipid scramblase activity. Palmitoylation regulates its localization to the cell membrane or the nucleus; trafficking to the cell membrane is dependent upon palmitoylation whereas in the absence of palmitoylation, localizes to the nucleus. As to expression, highly expressed in kidney, lung, liver and bone marrow, slightly in spleen, heart and macrophage.

The protein localises to the cell membrane. The protein resides in the nucleus. It localises to the cytoplasm. It is found in the perinuclear region. It catalyses the reaction a 1,2-diacyl-sn-glycero-3-phosphocholine(in) = a 1,2-diacyl-sn-glycero-3-phosphocholine(out). It carries out the reaction a 1,2-diacyl-sn-glycero-3-phosphoethanolamine(in) = a 1,2-diacyl-sn-glycero-3-phosphoethanolamine(out). The catalysed reaction is a 1,2-diacyl-sn-glycero-3-phospho-L-serine(in) = a 1,2-diacyl-sn-glycero-3-phospho-L-serine(out). Its function is as follows. Catalyzes calcium-induced ATP-independent rapid bidirectional and non-specific distribution of phospholipids (lipid scrambling or lipid flip-flop) between the inner and outer leaflet of the plasma membrane resulting in collapse of the phospholipid asymmetry which leads to phosphatidylserine externalization on the cell surface. Mediates calcium-dependent phosphatidylserine externalization and apoptosis in neurons via its association with TRPC5. Also exhibits magnesium-dependent nuclease activity against double-stranded DNA and RNA but not single-stranded DNA and can enhance DNA decatenation mediated by TOP2A. Negatively regulates FcR-mediated phagocytosis in differentiated macrophages. May contribute to cytokine-regulated cell proliferation and differentiation. The protein is Phospholipid scramblase 1 (Plscr1) of Mus musculus (Mouse).